We begin with the raw amino-acid sequence, 465 residues long: UDP-N-acetylglucosamine 1-carboxyvinyltransferase (465 aa).

Residue 22–23 coordinates phosphoenolpyruvate; sequence KN. Arginine 94 lines the UDP-N-acetyl-alpha-D-glucosamine pocket. The Proton donor role is filled by cysteine 119. At cysteine 119 the chain carries 2-(S-cysteinyl)pyruvic acid O-phosphothioketal. 2 residues coordinate UDP-N-acetyl-alpha-D-glucosamine: aspartate 313 and valine 335.

The protein belongs to the EPSP synthase family. MurA subfamily.

The protein resides in the cytoplasm. It catalyses the reaction phosphoenolpyruvate + UDP-N-acetyl-alpha-D-glucosamine = UDP-N-acetyl-3-O-(1-carboxyvinyl)-alpha-D-glucosamine + phosphate. Its pathway is cell wall biogenesis; peptidoglycan biosynthesis. Functionally, cell wall formation. Adds enolpyruvyl to UDP-N-acetylglucosamine. The polypeptide is UDP-N-acetylglucosamine 1-carboxyvinyltransferase (Protochlamydia amoebophila (strain UWE25)).